Reading from the N-terminus, the 1382-residue chain is DNA-directed RNA polymerase subunit beta' (1382 aa).

Residues C70, C72, C85, and C88 each contribute to the Zn(2+) site. D460, D462, and D464 together coordinate Mg(2+). Residues C808, C882, C889, and C892 each coordinate Zn(2+).

Belongs to the RNA polymerase beta' chain family. The RNAP catalytic core consists of 2 alpha, 1 beta, 1 beta' and 1 omega subunit. When a sigma factor is associated with the core the holoenzyme is formed, which can initiate transcription. The cofactor is Mg(2+). Requires Zn(2+) as cofactor.

The enzyme catalyses RNA(n) + a ribonucleoside 5'-triphosphate = RNA(n+1) + diphosphate. Its function is as follows. DNA-dependent RNA polymerase catalyzes the transcription of DNA into RNA using the four ribonucleoside triphosphates as substrates. The polypeptide is DNA-directed RNA polymerase subunit beta' (Citrifermentans bemidjiense (strain ATCC BAA-1014 / DSM 16622 / JCM 12645 / Bem) (Geobacter bemidjiensis)).